The primary structure comprises 347 residues: Protein RecA (347 aa).

Gly68 to Thr75 contacts ATP.

It belongs to the RecA family.

It is found in the cytoplasm. Can catalyze the hydrolysis of ATP in the presence of single-stranded DNA, the ATP-dependent uptake of single-stranded DNA by duplex DNA, and the ATP-dependent hybridization of homologous single-stranded DNAs. It interacts with LexA causing its activation and leading to its autocatalytic cleavage. The sequence is that of Protein RecA from Mycobacterium sp. (strain JLS).